Reading from the N-terminus, the 96-residue chain is Aspartyl/glutamyl-tRNA(Asn/Gln) amidotransferase subunit C (96 aa).

It belongs to the GatC family. In terms of assembly, heterotrimer of A, B and C subunits.

The enzyme catalyses L-glutamyl-tRNA(Gln) + L-glutamine + ATP + H2O = L-glutaminyl-tRNA(Gln) + L-glutamate + ADP + phosphate + H(+). The catalysed reaction is L-aspartyl-tRNA(Asn) + L-glutamine + ATP + H2O = L-asparaginyl-tRNA(Asn) + L-glutamate + ADP + phosphate + 2 H(+). In terms of biological role, allows the formation of correctly charged Asn-tRNA(Asn) or Gln-tRNA(Gln) through the transamidation of misacylated Asp-tRNA(Asn) or Glu-tRNA(Gln) in organisms which lack either or both of asparaginyl-tRNA or glutaminyl-tRNA synthetases. The reaction takes place in the presence of glutamine and ATP through an activated phospho-Asp-tRNA(Asn) or phospho-Glu-tRNA(Gln). The sequence is that of Aspartyl/glutamyl-tRNA(Asn/Gln) amidotransferase subunit C from Herpetosiphon aurantiacus (strain ATCC 23779 / DSM 785 / 114-95).